We begin with the raw amino-acid sequence, 190 residues long: MGEKMQGFQGWSIGIRFLTSCVSIASLILLLKSKQTVQVSVGLDYVTQQVKYSDTSAFVYLVFSDILVAVYCIVVLVGLIPAALGKSHPGKAGQWAIFIFDQVLAYVLLAAASSATEVAYLADKGMAKTSWEAVCPRFAHFCHTVMASISLSFVAVLLLALLAVVSASGLFGRFYRRPLFAVKMRHNTLI.

The Cytoplasmic segment spans residues 1 to 10 (MGEKMQGFQG). Residues 11 to 31 (WSIGIRFLTSCVSIASLILLL) form a helical membrane-spanning segment. At 32–59 (KSKQTVQVSVGLDYVTQQVKYSDTSAFV) the chain is on the extracellular side. Residues 60–80 (YLVFSDILVAVYCIVVLVGLI) form a helical membrane-spanning segment. Over 81 to 94 (PAALGKSHPGKAGQ) the chain is Cytoplasmic. Residues 95–115 (WAIFIFDQVLAYVLLAAASSA) form a helical membrane-spanning segment. The Extracellular segment spans residues 116-144 (TEVAYLADKGMAKTSWEAVCPRFAHFCHT). The chain crosses the membrane as a helical span at residues 145-165 (VMASISLSFVAVLLLALLAVV). The Cytoplasmic segment spans residues 166 to 190 (SASGLFGRFYRRPLFAVKMRHNTLI).

Belongs to the Casparian strip membrane proteins (CASP) family. As to quaternary structure, homodimer and heterodimers.

It localises to the cell membrane. The polypeptide is CASP-like protein 2U2 (Pteridium aquilinum subsp. aquilinum (Bracken fern)).